A 485-amino-acid chain; its full sequence is Otoconin-90 (485 aa).

The signal sequence occupies residues 1–17; sequence MIMLLMVGMLMAPCVGA. N-linked (GlcNAc...) asparagine glycosylation is present at asparagine 37. Residues 75–189 are phospholipase A2-like 1; it reads LLQFVNSMRC…SLNFLDASFC (115 aa). Cystine bridges form between cysteine 84-cysteine 144, cysteine 98-cysteine 189, cysteine 100-cysteine 116, cysteine 115-cysteine 171, cysteine 122-cysteine 164, cysteine 131-cysteine 157, and cysteine 151-cysteine 162. 2 N-linked (GlcNAc...) asparagine glycosylation sites follow: asparagine 178 and asparagine 288. 2 phospholipase A2-like regions span residues 315–371 and 383–435; these read MLQL…QVGC and CEDH…PVSC. N-linked (GlcNAc...) asparagine glycosylation is present at asparagine 417. Residues 444–485 are disordered; that stretch reads LASSVDSSSEENSEEAPPQMERLRRFLEKPPGPLGARPLGGK.

It belongs to the phospholipase A2 family. As to quaternary structure, interacts with OTOL1. In the embryo, highly expressed in the developing otocyst with weak expression in the brain. Also expressed in nonsensory epithelia of both the vestibular and cochlear portions of the developing inner ear. Not expressed in adult or embryonic macular sensory epithelia.

Its subcellular location is the secreted. In terms of biological role, major protein of the otoconia, a calcium carbonate structure in the saccule and utricle of the ear. Together with OTOL1, acts as a scaffold for otoconia biomineralization: sequesters calcium and forms interconnecting fibrils between otoconia that are incorporated into the calcium crystal structure. Together with OTOL1, modulates calcite crystal morphology and growth kinetics. It is unlikely that this protein has phospholipase A2 activity. In Mus musculus (Mouse), this protein is Otoconin-90.